The following is a 296-amino-acid chain: Bifunctional protein FolD 1 (296 aa).

Residues 167 to 169 (GCG) and isoleucine 235 contribute to the NADP(+) site.

It belongs to the tetrahydrofolate dehydrogenase/cyclohydrolase family. As to quaternary structure, homodimer.

The catalysed reaction is (6R)-5,10-methylene-5,6,7,8-tetrahydrofolate + NADP(+) = (6R)-5,10-methenyltetrahydrofolate + NADPH. It carries out the reaction (6R)-5,10-methenyltetrahydrofolate + H2O = (6R)-10-formyltetrahydrofolate + H(+). It participates in one-carbon metabolism; tetrahydrofolate interconversion. Catalyzes the oxidation of 5,10-methylenetetrahydrofolate to 5,10-methenyltetrahydrofolate and then the hydrolysis of 5,10-methenyltetrahydrofolate to 10-formyltetrahydrofolate. The sequence is that of Bifunctional protein FolD 1 from Nocardioides sp. (strain ATCC BAA-499 / JS614).